Reading from the N-terminus, the 546-residue chain is DDB1- and CUL4-associated factor 11 (546 aa).

Residues 1-19 (MGSRNSSSAGSGSGDPSEG) show a composition bias toward low complexity. A disordered region spans residues 1–40 (MGSRNSSSAGSGSGDPSEGLPRRGAGLRRSEEEEEEDEDV). L49 and S75 each carry phosphoserine. WD repeat units follow at residues 170-210 (SYSQ…RKFK), 216-258 (DVGW…TALD), 263-302 (ERRF…RTLQ), 305-345 (SHED…EDDP), 353-392 (GHQD…SREG), 435-480 (GVLH…KKLT), and 481-520 (NHKA…YFQD). The tract at residues 523 to 546 (PESEECASAPAPVPQSSTPFSSPQ) is disordered. The span at 536 to 546 (PQSSTPFSSPQ) shows a compositional bias: polar residues.

As to quaternary structure, interacts with DDB1 and CUL4A.

It functions in the pathway protein modification; protein ubiquitination. Functionally, may function as a substrate receptor for CUL4-DDB1 E3 ubiquitin-protein ligase complex. The chain is DDB1- and CUL4-associated factor 11 (DCAF11) from Homo sapiens (Human).